The primary structure comprises 208 residues: Dual specificity protein phosphatase 22-A (208 aa).

The Tyrosine-protein phosphatase domain occupies 4–144; it reads GMNKVIDGLY…LQEFQMKQVS (141 aa). The active-site Phosphocysteine intermediate is Cys-88.

This sequence belongs to the protein-tyrosine phosphatase family. Non-receptor class dual specificity subfamily.

It is found in the cytoplasm. Its subcellular location is the nucleus. It catalyses the reaction O-phospho-L-tyrosyl-[protein] + H2O = L-tyrosyl-[protein] + phosphate. It carries out the reaction O-phospho-L-seryl-[protein] + H2O = L-seryl-[protein] + phosphate. The enzyme catalyses O-phospho-L-threonyl-[protein] + H2O = L-threonyl-[protein] + phosphate. In terms of biological role, activates the Jnk signaling pathway. Dephosphorylates and deactivates p38 and stress-activated protein kinase/c-Jun N-terminal kinase (SAPK/JNK). The sequence is that of Dual specificity protein phosphatase 22-A from Danio rerio (Zebrafish).